We begin with the raw amino-acid sequence, 237 residues long: Endoglucanase-1 (237 aa).

The signal sequence occupies residues 1-16; sequence MKAFHLLAALAGAAVA. Q17 carries the post-translational modification Pyrrolidone carboxylic acid.

It belongs to the glycosyl hydrolase 12 (cellulase H) family.

It is found in the secreted. It carries out the reaction Endohydrolysis of (1-&gt;4)-beta-D-glucosidic linkages in cellulose, lichenin and cereal beta-D-glucans.. This chain is Endoglucanase-1, found in Aspergillus aculeatus.